The sequence spans 235 residues: Putative N-acetylmannosamine-6-phosphate 2-epimerase (235 aa).

The protein belongs to the NanE family.

It carries out the reaction an N-acyl-D-glucosamine 6-phosphate = an N-acyl-D-mannosamine 6-phosphate. It participates in amino-sugar metabolism; N-acetylneuraminate degradation; D-fructose 6-phosphate from N-acetylneuraminate: step 3/5. Converts N-acetylmannosamine-6-phosphate (ManNAc-6-P) to N-acetylglucosamine-6-phosphate (GlcNAc-6-P). The sequence is that of Putative N-acetylmannosamine-6-phosphate 2-epimerase from Aliivibrio fischeri (strain ATCC 700601 / ES114) (Vibrio fischeri).